The chain runs to 425 residues: Succinyl-diaminopimelate desuccinylase (425 aa).

His-96 serves as a coordination point for Zn(2+). Residue Asp-98 is part of the active site. Asp-129 provides a ligand contact to Zn(2+). Glu-163 (proton acceptor) is an active-site residue. 3 residues coordinate Zn(2+): Glu-164, Glu-192, and His-378.

The protein belongs to the peptidase M20A family. DapE subfamily. As to quaternary structure, homodimer. The cofactor is Zn(2+). Requires Co(2+) as cofactor.

The catalysed reaction is N-succinyl-(2S,6S)-2,6-diaminopimelate + H2O = (2S,6S)-2,6-diaminopimelate + succinate. Its pathway is amino-acid biosynthesis; L-lysine biosynthesis via DAP pathway; LL-2,6-diaminopimelate from (S)-tetrahydrodipicolinate (succinylase route): step 3/3. In terms of biological role, catalyzes the hydrolysis of N-succinyl-L,L-diaminopimelic acid (SDAP), forming succinate and LL-2,6-diaminopimelate (DAP), an intermediate involved in the bacterial biosynthesis of lysine and meso-diaminopimelic acid, an essential component of bacterial cell walls. The protein is Succinyl-diaminopimelate desuccinylase of Polaromonas sp. (strain JS666 / ATCC BAA-500).